The chain runs to 391 residues: Nutrient and stress factor 1 (391 aa).

Residues 1 to 27 (MENTTNRNTAGVLTSSNGNFATNSVAA) show a composition bias toward polar residues. The tract at residues 1–37 (MENTTNRNTAGVLTSSNGNFATNSVAASTPKRSKSAR) is disordered. 2 C2H2-type zinc fingers span residues 41–66 (FKCT…IRKH) and 72–95 (FQCP…ESVH). A disordered region spans residues 91–149 (RESVHAHKNHHSTSSHQRKPSSSSLSSSSSASSSSSASSSTSYSDPYRKTNINSGNMPM). Basic residues predominate over residues 96–109 (AHKNHHSTSSHQRK). A compositionally biased stretch (low complexity) spans 110 to 134 (PSSSSLSSSSSASSSSSASSSTSYS). A phosphoserine mark is found at Ser-162 and Ser-163. Residues 326–374 (AFSQPPNGNKNNNMSSSKNGGKGGENFKNTDDRNDNNNKKRSETLSESD) form a disordered region. The segment covering 332–344 (NGNKNNNMSSSKN) has biased composition (low complexity). Residues 353-369 (KNTDDRNDNNNKKRSET) show a composition bias toward basic and acidic residues.

It localises to the nucleus. In terms of biological role, transcription factor that participates in the transcriptional activation of glucose-repressed genes during exponential growth in non-fermentable carbon conditions. Also involved in salt-stress response. This chain is Nutrient and stress factor 1 (USV1), found in Saccharomyces cerevisiae (strain ATCC 204508 / S288c) (Baker's yeast).